The following is a 434-amino-acid chain: Beta-enolase (434 aa).

At S2 the chain carries N-acetylserine. 2 residues coordinate substrate: H158 and E167. The active-site Proton donor is E210. Residues D245, E293, and D318 each coordinate Mg(2+). Substrate-binding residues include E293 and D318. K343 (proton acceptor) is an active-site residue. Substrate is bound by residues 370–373 and K394; that span reads SHRS.

The protein belongs to the enolase family. As to quaternary structure, homodimer. Interacts with PNKD. Mg(2+) is required as a cofactor.

Its subcellular location is the cytoplasm. It carries out the reaction (2R)-2-phosphoglycerate = phosphoenolpyruvate + H2O. The protein operates within carbohydrate degradation; glycolysis; pyruvate from D-glyceraldehyde 3-phosphate: step 4/5. Its function is as follows. Glycolytic enzyme that catalyzes the conversion of 2-phosphoglycerate to phosphoenolpyruvate. This chain is Beta-enolase (ENO3), found in Gallus gallus (Chicken).